Here is a 339-residue protein sequence, read N- to C-terminus: Ketol-acid reductoisomerase (NADP(+)) (339 aa).

Residues 1–182 (MRVYYDRDAD…GGGRSGIIET (182 aa)) form the KARI N-terminal Rossmann domain. Residues 24–27 (YGSQ), Arg-48, Ser-51, Thr-53, and 83–86 (DELQ) each bind NADP(+). Residue His-108 is part of the active site. Gly-134 contacts NADP(+). A KARI C-terminal knotted domain is found at 183–328 (SFREECETDL…EKLRAMMPWI (146 aa)). Positions 191, 195, 227, and 231 each coordinate Mg(2+). Ser-252 provides a ligand contact to substrate.

It belongs to the ketol-acid reductoisomerase family. Mg(2+) is required as a cofactor.

The enzyme catalyses (2R)-2,3-dihydroxy-3-methylbutanoate + NADP(+) = (2S)-2-acetolactate + NADPH + H(+). The catalysed reaction is (2R,3R)-2,3-dihydroxy-3-methylpentanoate + NADP(+) = (S)-2-ethyl-2-hydroxy-3-oxobutanoate + NADPH + H(+). Its pathway is amino-acid biosynthesis; L-isoleucine biosynthesis; L-isoleucine from 2-oxobutanoate: step 2/4. It participates in amino-acid biosynthesis; L-valine biosynthesis; L-valine from pyruvate: step 2/4. Functionally, involved in the biosynthesis of branched-chain amino acids (BCAA). Catalyzes an alkyl-migration followed by a ketol-acid reduction of (S)-2-acetolactate (S2AL) to yield (R)-2,3-dihydroxy-isovalerate. In the isomerase reaction, S2AL is rearranged via a Mg-dependent methyl migration to produce 3-hydroxy-3-methyl-2-ketobutyrate (HMKB). In the reductase reaction, this 2-ketoacid undergoes a metal-dependent reduction by NADPH to yield (R)-2,3-dihydroxy-isovalerate. This chain is Ketol-acid reductoisomerase (NADP(+)), found in Paramagnetospirillum magneticum (strain ATCC 700264 / AMB-1) (Magnetospirillum magneticum).